We begin with the raw amino-acid sequence, 369 residues long: CCA-adding enzyme (369 aa).

ATP-binding residues include Gly-8 and Arg-11. Gly-8 and Arg-11 together coordinate CTP. Mg(2+) is bound by residues Asp-21 and Asp-23. ATP contacts are provided by Arg-91, Arg-137, and Arg-140. CTP contacts are provided by Arg-91, Arg-137, and Arg-140.

It belongs to the tRNA nucleotidyltransferase/poly(A) polymerase family. Bacterial CCA-adding enzyme type 2 subfamily. Requires Mg(2+) as cofactor.

It catalyses the reaction a tRNA precursor + 2 CTP + ATP = a tRNA with a 3' CCA end + 3 diphosphate. The catalysed reaction is a tRNA with a 3' CCA end + 2 CTP + ATP = a tRNA with a 3' CCACCA end + 3 diphosphate. In terms of biological role, catalyzes the addition and repair of the essential 3'-terminal CCA sequence in tRNAs without using a nucleic acid template. Adds these three nucleotides in the order of C, C, and A to the tRNA nucleotide-73, using CTP and ATP as substrates and producing inorganic pyrophosphate. tRNA 3'-terminal CCA addition is required both for tRNA processing and repair. Also involved in tRNA surveillance by mediating tandem CCA addition to generate a CCACCA at the 3' terminus of unstable tRNAs. While stable tRNAs receive only 3'-terminal CCA, unstable tRNAs are marked with CCACCA and rapidly degraded. The sequence is that of CCA-adding enzyme from Francisella tularensis subsp. novicida (strain U112).